A 256-amino-acid polypeptide reads, in one-letter code: uncharacterized protein (256 aa).

NADP(+) is bound by residues Ile18, Ser37, Lys46, Asp66, Tyr164, Lys168, Val197, and Thr199. The Proton donor role is filled by Tyr164. Lys168 serves as the catalytic Lowers pKa of active site Tyr.

Belongs to the short-chain dehydrogenases/reductases (SDR) family.

The protein localises to the cytoplasm. This is an uncharacterized protein from Saccharomyces cerevisiae (strain ATCC 204508 / S288c) (Baker's yeast).